A 323-amino-acid chain; its full sequence is tRNA(Ile)-lysidine synthase (323 aa).

Position 33–38 (33–38 (SGGPDS)) interacts with ATP.

It belongs to the tRNA(Ile)-lysidine synthase family.

Its subcellular location is the cytoplasm. The enzyme catalyses cytidine(34) in tRNA(Ile2) + L-lysine + ATP = lysidine(34) in tRNA(Ile2) + AMP + diphosphate + H(+). Functionally, ligates lysine onto the cytidine present at position 34 of the AUA codon-specific tRNA(Ile) that contains the anticodon CAU, in an ATP-dependent manner. Cytidine is converted to lysidine, thus changing the amino acid specificity of the tRNA from methionine to isoleucine. This is tRNA(Ile)-lysidine synthase from Mycobacterium bovis (strain ATCC BAA-935 / AF2122/97).